The primary structure comprises 213 residues: Ribosomal RNA small subunit methyltransferase G (213 aa).

Residues G75, F80, I128–E129, and R144 each bind S-adenosyl-L-methionine.

Belongs to the methyltransferase superfamily. RNA methyltransferase RsmG family.

The protein resides in the cytoplasm. The catalysed reaction is guanosine(527) in 16S rRNA + S-adenosyl-L-methionine = N(7)-methylguanosine(527) in 16S rRNA + S-adenosyl-L-homocysteine. Its function is as follows. Specifically methylates the N7 position of guanine in position 527 of 16S rRNA. This chain is Ribosomal RNA small subunit methyltransferase G, found in Brucella abortus (strain S19).